Consider the following 61-residue polypeptide: Small ribosomal subunit protein uS14B (61 aa).

The Zn(2+) site is built by Cys-24, Cys-27, Cys-40, and Cys-43.

Belongs to the universal ribosomal protein uS14 family. Zinc-binding uS14 subfamily. In terms of assembly, part of the 30S ribosomal subunit. Contacts proteins S3 and S10. Zn(2+) is required as a cofactor.

Functionally, binds 16S rRNA, required for the assembly of 30S particles and may also be responsible for determining the conformation of the 16S rRNA at the A site. This Mycolicibacterium smegmatis (strain ATCC 700084 / mc(2)155) (Mycobacterium smegmatis) protein is Small ribosomal subunit protein uS14B.